Here is a 313-residue protein sequence, read N- to C-terminus: Olfactory receptor 1M1 (313 aa).

At 1–25 the chain is on the extracellular side; it reads MEPRNQTSASQFILLGLSEKPEQET. Residue Asn5 is glycosylated (N-linked (GlcNAc...) asparagine). Residues 26–49 form a helical membrane-spanning segment; it reads LLFSLFFCMYLVMVVGNLLIILAI. The Cytoplasmic segment spans residues 50-57; the sequence is SIDSHLHT. The helical transmembrane segment at 58-79 threads the bilayer; sequence PMYFFLANLSLVDFCLATNTIP. Residues 80-100 are Extracellular-facing; that stretch reads KMLVSLQTGSKAISYPCCLIQ. Cysteines 97 and 189 form a disulfide. Residues 101–120 traverse the membrane as a helical segment; that stretch reads MYFFHFFGIVDSVIIAMMAY. Residues 121–139 are Cytoplasmic-facing; sequence DRFVAICHPLHYAKIMSLR. A helical transmembrane segment spans residues 140-158; it reads LCRLLVGALWAFSCFISLT. Over 159–196 the chain is Extracellular; the sequence is HILLMARLVFCGSHEVPHYFCDLTPILRLSCTDTSVNR. The chain crosses the membrane as a helical span at residues 197-219; the sequence is IFILIVAGMVIATPFVCILASYA. Residues 220 to 236 lie on the Cytoplasmic side of the membrane; it reads RILVAIMKVPSAGGRKK. A helical membrane pass occupies residues 237–259; sequence AFSTCSSHLSVVALFYGTTIGVY. The Extracellular portion of the chain corresponds to 260–272; that stretch reads LCPSSVLTTVKEK. The helical transmembrane segment at 273–292 threads the bilayer; it reads ASAVMYTAVTPMLNPFIYSL. Residues 293 to 313 lie on the Cytoplasmic side of the membrane; the sequence is RNRDLKGALRKLVNRKITSSS.

This sequence belongs to the G-protein coupled receptor 1 family.

It localises to the cell membrane. Functionally, odorant receptor. In Homo sapiens (Human), this protein is Olfactory receptor 1M1.